Reading from the N-terminus, the 489-residue chain is Betaine aldehyde dehydrogenase (489 aa).

K(+) contacts are provided by threonine 26 and aspartate 93. Residue 150 to 152 (GAW) coordinates NAD(+). The Charge relay system role is filled by lysine 162. Residue 176–179 (KPSE) coordinates NAD(+). A K(+)-binding site is contributed by valine 180. 229 to 232 (GVET) contacts NAD(+). Leucine 245 is a K(+) binding site. Residue glutamate 251 is the Proton acceptor of the active site. 3 residues coordinate NAD(+): glycine 253, cysteine 285, and glutamate 386. The active-site Nucleophile is cysteine 285. Cysteine sulfenic acid (-SOH) is present on cysteine 285. The K(+) site is built by lysine 456 and glycine 459. The Charge relay system role is filled by glutamate 463.

Belongs to the aldehyde dehydrogenase family. In terms of assembly, dimer of dimers. Requires K(+) as cofactor.

It carries out the reaction betaine aldehyde + NAD(+) + H2O = glycine betaine + NADH + 2 H(+). The protein operates within amine and polyamine biosynthesis; betaine biosynthesis via choline pathway; betaine from betaine aldehyde: step 1/1. Its function is as follows. Involved in the biosynthesis of the osmoprotectant glycine betaine. Catalyzes the irreversible oxidation of betaine aldehyde to the corresponding acid. This is Betaine aldehyde dehydrogenase from Burkholderia lata (strain ATCC 17760 / DSM 23089 / LMG 22485 / NCIMB 9086 / R18194 / 383).